A 306-amino-acid polypeptide reads, in one-letter code: Probable L,D-transpeptidase YbiS (306 aa).

Positions 1-24 are cleaved as a signal peptide; that stretch reads MNMKLKTLFAAAFAVVGFCSTASA. One can recognise a L,D-TPase catalytic domain in the interval 99–234; sequence EGIVINSAEM…VPVGTRVQFI (136 aa). H194 serves as the catalytic Proton donor/acceptor. C210 acts as the Nucleophile in catalysis.

It belongs to the YkuD family.

Its subcellular location is the periplasm. It functions in the pathway cell wall biogenesis; peptidoglycan biosynthesis. In terms of biological role, responsible, at least in part, for anchoring of the major outer membrane lipoprotein (Lpp) to the peptidoglycan via a meso-diaminopimelyl-L-Lys- bond on the terminal residue of Lpp. The polypeptide is Probable L,D-transpeptidase YbiS (ybiS) (Escherichia coli O6:H1 (strain CFT073 / ATCC 700928 / UPEC)).